The primary structure comprises 38 residues: Mu-hexatoxin-Mg1b (38 aa).

3 disulfide bridges follow: cysteine 1–cysteine 15, cysteine 8–cysteine 20, and cysteine 14–cysteine 34. The residue at position 38 (serine 38) is a Serine amide.

The protein belongs to the neurotoxin 14 (magi-1) family. 09 (magi-1) subfamily. Expressed by the venom gland.

Its subcellular location is the secreted. In terms of biological role, insecticidal neurotoxin. Shows competition for site 3 of insect voltage-gated sodium channels (Nav). This is Mu-hexatoxin-Mg1b from Macrothele gigas (Japanese funnel web spider).